Here is a 176-residue protein sequence, read N- to C-terminus: Dual-action ribosomal maturation protein DarP (176 aa).

Positions 1 to 10 (MTVPNHQQDI) are enriched in polar residues. Residues 1 to 22 (MTVPNHQQDISDSDLESRPSKT) are disordered.

Belongs to the DarP family.

It localises to the cytoplasm. In terms of biological role, member of a network of 50S ribosomal subunit biogenesis factors which assembles along the 30S-50S interface, preventing incorrect 23S rRNA structures from forming. Promotes peptidyl transferase center (PTC) maturation. The sequence is that of Dual-action ribosomal maturation protein DarP from Nitrosomonas eutropha (strain DSM 101675 / C91 / Nm57).